The sequence spans 707 residues: Translation initiation factor IF-2 (707 aa).

A compositionally biased stretch (basic and acidic residues) spans 55–80 (LAEKPKEEKQKDQKNHEQEAQDKEEK). Residues 55–88 (LAEKPKEEKQKDQKNHEQEAQDKEEKEIEEDSFY) are disordered. In terms of domain architecture, tr-type G spans 209–378 (PRPPIVTVMG…LLVAEMEDLK (170 aa)). The segment at 218–225 (GHVDHGKT) is G1. 218–225 (GHVDHGKT) contacts GTP. Positions 243–247 (GITQH) are G2. Positions 264–267 (DTPG) are G3. GTP contacts are provided by residues 264–268 (DTPGH) and 318–321 (NKID). A G4 region spans residues 318–321 (NKID). A G5 region spans residues 354–356 (SAK).

This sequence belongs to the TRAFAC class translation factor GTPase superfamily. Classic translation factor GTPase family. IF-2 subfamily.

Its subcellular location is the cytoplasm. Functionally, one of the essential components for the initiation of protein synthesis. Protects formylmethionyl-tRNA from spontaneous hydrolysis and promotes its binding to the 30S ribosomal subunits. Also involved in the hydrolysis of GTP during the formation of the 70S ribosomal complex. This chain is Translation initiation factor IF-2, found in Caldanaerobacter subterraneus subsp. tengcongensis (strain DSM 15242 / JCM 11007 / NBRC 100824 / MB4) (Thermoanaerobacter tengcongensis).